The sequence spans 221 residues: Epididymal secretory glutathione peroxidase (221 aa).

The first 21 residues, 1-21 (MVTELRVFYLVPLLLASYVQT), serve as a signal peptide directing secretion. Cys-73 is a catalytic residue.

This sequence belongs to the glutathione peroxidase family. Epididymis.

It localises to the secreted. The catalysed reaction is 2 glutathione + H2O2 = glutathione disulfide + 2 H2O. In terms of biological role, protects cells and enzymes from oxidative damage, by catalyzing the reduction of hydrogen peroxide, lipid peroxides and organic hydroperoxide, by glutathione. May constitute a glutathione peroxidase-like protective system against peroxide damage in sperm membrane lipids. This Mus musculus (Mouse) protein is Epididymal secretory glutathione peroxidase (Gpx5).